We begin with the raw amino-acid sequence, 207 residues long: Dephospho-CoA kinase (207 aa).

One can recognise a DPCK domain in the interval 5 to 202 (VVGLTGGIGS…LQYLKLSAEK (198 aa)). 13 to 18 (GSGKST) is an ATP binding site.

The protein belongs to the CoaE family.

Its subcellular location is the cytoplasm. It carries out the reaction 3'-dephospho-CoA + ATP = ADP + CoA + H(+). The protein operates within cofactor biosynthesis; coenzyme A biosynthesis; CoA from (R)-pantothenate: step 5/5. Catalyzes the phosphorylation of the 3'-hydroxyl group of dephosphocoenzyme A to form coenzyme A. The sequence is that of Dephospho-CoA kinase from Dechloromonas aromatica (strain RCB).